A 209-amino-acid polypeptide reads, in one-letter code: Protein ASG7 (209 aa).

Residues 1–49 (MTTLASSIEHKTKHLAAPFENDENTWMKKYCCQCKSCKMSVPVQPWLPR) lie on the Lumenal side of the membrane. The helical transmembrane segment at 50–70 (FFVFGILCPVFWLVNLLAWWF) threads the bilayer. Topologically, residues 71-184 (LQYWQPHELE…LLRKTFRNWN (114 aa)) are cytoplasmic. 3 positions are modified to phosphoserine: serine 121, serine 123, and serine 125. Residue threonine 153 is modified to Phosphothreonine. The chain crosses the membrane as a helical span at residues 185 to 205 (LRSLLGLLIDSILIIFVVLLC). The Lumenal portion of the chain corresponds to 206 to 209 (KKSR).

It localises to the endomembrane system. In terms of biological role, required for receptor inhibition of inappropriately expressed a-factor receptor (STE3) in MAT a cells. Inhibits signaling by relocalizing the G protein beta-gamma (STE4-STE18) subunit to intracellular membranes. May also be a mechanism for the down-regulation of the mating pheromone response after the zygotic fusion event, promoting the transition of the new diploid cell to vegetative growth. This chain is Protein ASG7 (ASG7), found in Saccharomyces cerevisiae (strain YJM789) (Baker's yeast).